We begin with the raw amino-acid sequence, 296 residues long: Chelated iron transport system membrane protein YfeB (296 aa).

The ABC transporter domain occupies 11 to 246 (LVVDNVTVTY…NLEMTFGGVL (236 aa)). 44 to 51 (GVNGSGKS) serves as a coordination point for ATP. The segment at 276–296 (VFYGHTKNDPPAQSQSKEQNS) is disordered. The span at 286–296 (PAQSQSKEQNS) shows a compositional bias: polar residues.

The protein belongs to the ABC transporter superfamily.

The protein resides in the cell inner membrane. Part of an ATP-driven transport system YfeABCD for chelated iron. The polypeptide is Chelated iron transport system membrane protein YfeB (yfeB) (Yersinia pestis).